A 422-amino-acid chain; its full sequence is GPI mannosyltransferase 1 (422 aa).

A run of 8 helical transmembrane segments spans residues 10–30 (TTPL…YGIY), 82–102 (FPAF…WLIL), 162–182 (IILG…PAIV), 216–236 (LKFG…MFAI), 282–302 (IESF…PLAL), 327–347 (SQYF…SSFL), 352–372 (LGIF…QQGY), and 385–405 (GLWL…GVII).

Belongs to the PIGM family.

The protein resides in the endoplasmic reticulum membrane. Its pathway is glycolipid biosynthesis; glycosylphosphatidylinositol-anchor biosynthesis. Its function is as follows. Mannosyltransferase involved in glycosylphosphatidylinositol-anchor biosynthesis. Transfers the first alpha-1,4-mannose to GlcN-acyl-PI during GPI precursor assembly. Required for cell wall integrity. This is GPI mannosyltransferase 1 (GPI14) from Gibberella zeae (strain ATCC MYA-4620 / CBS 123657 / FGSC 9075 / NRRL 31084 / PH-1) (Wheat head blight fungus).